Consider the following 122-residue polypeptide: Large ribosomal subunit protein uL14c (122 aa).

Belongs to the universal ribosomal protein uL14 family. As to quaternary structure, part of the 50S ribosomal subunit.

The protein localises to the plastid. Its subcellular location is the chloroplast. Functionally, binds to 23S rRNA. The sequence is that of Large ribosomal subunit protein uL14c from Cucumis sativus (Cucumber).